A 65-amino-acid polypeptide reads, in one-letter code: MKAKDIRALTTDEMLEKEKQYKEELFNLRFQQATGQLENTARLSKVRKNIARIKTILSEKALENN.

Belongs to the universal ribosomal protein uL29 family.

The chain is Large ribosomal subunit protein uL29 from Lactobacillus acidophilus (strain ATCC 700396 / NCK56 / N2 / NCFM).